The primary structure comprises 202 residues: Imidazoleglycerol-phosphate dehydratase (202 aa).

It belongs to the imidazoleglycerol-phosphate dehydratase family.

It localises to the cytoplasm. The enzyme catalyses D-erythro-1-(imidazol-4-yl)glycerol 3-phosphate = 3-(imidazol-4-yl)-2-oxopropyl phosphate + H2O. It participates in amino-acid biosynthesis; L-histidine biosynthesis; L-histidine from 5-phospho-alpha-D-ribose 1-diphosphate: step 6/9. The protein is Imidazoleglycerol-phosphate dehydratase of Brucella suis (strain ATCC 23445 / NCTC 10510).